The following is a 279-amino-acid chain: DegV domain-containing protein SpyM3_1149 (279 aa).

Residues isoleucine 4–tyrosine 278 enclose the DegV domain. The hexadecanoate site is built by threonine 62 and serine 95.

Functionally, may bind long-chain fatty acids, such as palmitate, and may play a role in lipid transport or fatty acid metabolism. In Streptococcus pyogenes serotype M3 (strain ATCC BAA-595 / MGAS315), this protein is DegV domain-containing protein SpyM3_1149.